A 165-amino-acid chain; its full sequence is Adenosine 5'-monophosphoramidase HINT3 (165 aa).

The segment at 1–23 (MAEKQAGLVGEPDPEGSSPGTSE) is disordered. An N-acetylalanine modification is found at A2. The HIT domain occupies 32–143 (VFCRVAAGQE…PVKEFGFLSK (112 aa)). AMP is bound by residues 59 to 60 (DI) and 128 to 130 (HLH). The Histidine triad motif signature appears at 126 to 130 (HLHLH). The active-site Tele-AMP-histidine intermediate is H128.

Belongs to the HINT family. As to quaternary structure, forms dimers to octamers and even larger oligomer. Interacts with CALM1.

The protein localises to the cytoplasm. The protein resides in the nucleus. The enzyme catalyses adenosine 5'-phosphoramidate + H2O = AMP + NH4(+). Functionally, exhibits adenosine 5'-monophosphoramidase activity, hydrolyzing purine nucleotide phosphoramidates with a single phosphate group such as adenosine 5'monophosphoramidate (AMP-NH2) to yield AMP and NH2. Hydrolyzes lysyl-AMP (AMP-N-epsilon-(N-alpha-acetyl lysine methyl ester)) generated by lysine tRNA ligase. The chain is Adenosine 5'-monophosphoramidase HINT3 (Hint3) from Mus musculus (Mouse).